Reading from the N-terminus, the 323-residue chain is Ankyrin repeat and SOCS box protein 11 (323 aa).

ANK repeat units follow at residues 64–93, 97–126, 130–159, 162–191, 195–224, 227–256, and 260–289; these read ADRS…NVNL, NRVS…HVNA, HGAT…KAQL, YLAS…NIEQ, QLGT…SVDH, WLDT…NLNL, and QGKS…ALSQ. The SOCS box domain maps to 273–323; the sequence is SVRQALLLHEGPPALSQLCRLCVRKCLGRTCHHAIYALGLPESLEKFLLYQ.

This sequence belongs to the ankyrin SOCS box (ASB) family. Substrate-recognition component of the ECS(ASB11) complex, composed of ASB11, CUL5, ELOB, ELOC and RNF7/RBX2.

The protein localises to the endoplasmic reticulum. It participates in protein modification; protein ubiquitination. Its function is as follows. Substrate-recognition component of a cullin-5-RING E3 ubiquitin-protein ligase complex (ECS complex, also named CRL5 complex), which mediates the ubiquitination and subsequent proteasomal degradation of target proteins, such as BIK, DIRAS2 and RPN1. The ECS(ASB11) complex acts as a regulator of the endoplasmic reticulum unfolded protein response by mediating ubiquitination and degradation of BIK. This chain is Ankyrin repeat and SOCS box protein 11 (Asb11), found in Mus musculus (Mouse).